A 296-amino-acid chain; its full sequence is Probable endonuclease 4 (296 aa).

Residues His-68, His-109, Glu-144, Asp-178, His-181, His-213, Asp-226, His-228, and Glu-258 each contribute to the Zn(2+) site.

It belongs to the AP endonuclease 2 family. Requires Zn(2+) as cofactor.

It carries out the reaction Endonucleolytic cleavage to 5'-phosphooligonucleotide end-products.. Functionally, endonuclease IV plays a role in DNA repair. It cleaves phosphodiester bonds at apurinic or apyrimidinic (AP) sites, generating a 3'-hydroxyl group and a 5'-terminal sugar phosphate. The chain is Probable endonuclease 4 from Staphylococcus aureus (strain NCTC 8325 / PS 47).